Consider the following 223-residue polypeptide: Endonuclease NucS (223 aa).

The protein belongs to the NucS endonuclease family.

The protein resides in the cytoplasm. Its function is as follows. Cleaves both 3' and 5' ssDNA extremities of branched DNA structures. This is Endonuclease NucS from Streptomyces griseus subsp. griseus (strain JCM 4626 / CBS 651.72 / NBRC 13350 / KCC S-0626 / ISP 5235).